The sequence spans 2696 residues: Protein ILITYHIA (2696 aa).

A compositionally biased stretch (polar residues) spans 1 to 18 (MSYSMVNASSAVSSPETA). A disordered region spans residues 1 to 26 (MSYSMVNASSAVSSPETAKNSDEPPP). 9 HEAT repeats span residues 162 to 204 (DIAP…MKTF), 253 to 290 (STQA…IYSL), 303 to 340 (KDSP…DVLN), 364 to 400 (EFQT…IDLS), 401 to 438 (KYAL…KSSN), 487 to 525 (SLSR…RSSV), 526 to 562 (AIQP…NPDT), 564 to 601 (SQIS…SKIA), and 642 to 677 (VVCV…FLLC). Residues 901 to 941 (KQEPSSNHSLKKGLASRETANSGRRDTAKLTKKADKGKTAK) form a disordered region. The span at 923 to 941 (GRRDTAKLTKKADKGKTAK) shows a compositional bias: basic and acidic residues. HEAT repeat units follow at residues 985–1021 (HSQL…CTVQ), 1082–1118 (DTFT…GLQA), 1188–1225 (HDLG…ESPS), 1273–1311 (KDLP…KHGK), 1315–1355 (SLLF…HLAR), 1358–1395 (PKVH…SKQE), 1397–1433 (APAL…GFGI), 1436–1474 (LKKY…KLGK), 1478–1515 (PYVI…QLSA), 1516–1553 (YGVK…CAPQ), 1564–1600 (PKLT…VIKN), 1601–1638 (PEIS…NSVD), 1640–1677 (PSLA…LVTE), 1683–1720 (PYIG…GMGE), 1722–1759 (NFPD…ALGT), 1761–1797 (YFEN…SLGA), 1801–1838 (KYLQ…HHAT), and 1840–1876 (SLPL…KVAG). Ser1887 carries the phosphoserine modification. HEAT repeat units follow at residues 1908–1945 (DKRN…NTPK), 1949–1986 (EIMP…KLGE), 1988–2024 (VLPL…SAGR), 2029–2066 (SFMD…SAGL), 2067–2102 (QAMD…VRTA), 2104–2137 (VLPH…AGFN), 2138–2175 (THLG…VIDE), 2177–2213 (GVET…SSKL), 2217–2254 (DEAP…SVPK), 2258–2292 (PSYI…LCLP), 2293–2330 (KSLK…VTSE), 2335–2373 (EFVI…RGGM), 2377–2414 (PFLP…LSTR), 2416–2450 (DPLV…HAGK), 2455–2492 (AVRV…YLEA), 2494–2530 (QLSV…HNPS), 2536–2573 (SLFS…KQLA), 2580–2617 (KVVI…DNPS), and 2620–2658 (MANI…LTKG).

It belongs to the GCN1 family.

In terms of biological role, involved in immunity against bacterial infection and in non-host resistance. Required for embryo development. Required for systemic acquired resistance, but functions in an salicylic acid-independent manner. Required for bacterium-triggered stomatal closure response. This chain is Protein ILITYHIA, found in Arabidopsis thaliana (Mouse-ear cress).